The chain runs to 106 residues: Iron-sulfur cluster assembly protein CyaY (106 aa).

Belongs to the frataxin family.

Its function is as follows. Involved in iron-sulfur (Fe-S) cluster assembly. May act as a regulator of Fe-S biogenesis. The protein is Iron-sulfur cluster assembly protein CyaY of Shigella flexneri.